A 596-amino-acid chain; its full sequence is Elongation factor 4 (596 aa).

The 183-residue stretch at 2-184 (KHIRNFSIIA…EIIAKIPPPV (183 aa)) folds into the tr-type G domain. GTP is bound by residues 14 to 19 (DHGKST) and 131 to 134 (NKID).

This sequence belongs to the TRAFAC class translation factor GTPase superfamily. Classic translation factor GTPase family. LepA subfamily.

The protein resides in the cell inner membrane. The catalysed reaction is GTP + H2O = GDP + phosphate + H(+). Its function is as follows. Required for accurate and efficient protein synthesis under certain stress conditions. May act as a fidelity factor of the translation reaction, by catalyzing a one-codon backward translocation of tRNAs on improperly translocated ribosomes. Back-translocation proceeds from a post-translocation (POST) complex to a pre-translocation (PRE) complex, thus giving elongation factor G a second chance to translocate the tRNAs correctly. Binds to ribosomes in a GTP-dependent manner. This is Elongation factor 4 from Shewanella frigidimarina (strain NCIMB 400).